A 168-amino-acid polypeptide reads, in one-letter code: Translationally-controlled tumor protein homolog (168 aa).

The TCTP domain occupies 1 to 168; that stretch reads MLLYKDVISG…FKDGLVSEKF (168 aa). S78 is subject to Phosphoserine.

The protein belongs to the TCTP family.

Its subcellular location is the cytoplasm. In terms of biological role, involved in calcium binding and microtubule stabilization. May be a guanine nucleotide-free chaperone (GFC). This Schizosaccharomyces pombe (strain 972 / ATCC 24843) (Fission yeast) protein is Translationally-controlled tumor protein homolog (p23fy).